The chain runs to 113 residues: Pancreatic progenitor cell differentiation and proliferation factor A (113 aa).

Belongs to the PPDPF family.

Probable regulator of exocrine pancreas development. This Xenopus laevis (African clawed frog) protein is Pancreatic progenitor cell differentiation and proliferation factor A (ppdpf-a).